A 711-amino-acid polypeptide reads, in one-letter code: MTRTLLSWPGGRRLKWLVLAAWIGLLIVLQPLAGKLGDVESNDAAAWLPGNAESTEVLELSEKFQPADTSPTVIVYDRPSGITAADEAKARADATHFADGTGVVGEPYGPVRSDDGKALRTVVNVHLGKDGWEGLNAAAKDMRAIARPSAPDGLGVHVTGPTGYAADSAESFSSADFKLTLVTLLIVVTILVVTYRSPLLWLLPMISAGMSLVISQAIVYLLAKNAGLTVNAQTAMILTVLVLGAATDYALLLVARYREELRRHEDRHEAMAVALRRAGPAIVASAATVAVSMLVLLLAALNSTKGLGPVCAVGVLVGLLSMMTLLPALLVIFGRWVFWPARPKHGTEPDVTRGLWSRIARLVSGRPRAVWVTTSLLLGAVATLAVTLNADGLQQKDGFKTKPESVVGEEILTRHFPAGSGEPMVVIAKGASADQVHAALETVPGVIEVAPPQVKDGLAYVEATLGAGADSPAAMRSVTAARETLARLDGAQARVGGSSAVVHDMREASSRDRGLIIPVILAVVFCILALLLRALVAPLLLIASVVLSFFTALGLAALFFNHVFDFAGADSAFPLWVFVFLVALGVDYNIFLVTRIKEESDRLGTRQGALKGLTSTGGVITAAGLVLAGTFAALATLPLVFIAELGFTVAVGVLLDTMIVRSVLVTALTLDVGRWMWWPHPLARREDPSEDPAVSGMPDSIDSEASTTASR.

12 helical membrane-spanning segments follow: residues 14-34, 175-195, 199-219, 235-255, 281-301, 313-333, 369-389, 516-536, 540-560, 573-593, 623-643, and 645-665; these read LKWL…PLAG, ADFK…VVTY, LLWL…QAIV, AMIL…LLVA, AIVA…LAAL, VGVL…LVIF, AVWV…VTLN, IIPV…RALV, LLIA…ALFF, FPLW…IFLV, AGLV…VFIA, and LGFT…SVLV. Residues 685–711 form a disordered region; sequence REDPSEDPAVSGMPDSIDSEASTTASR.

Belongs to the resistance-nodulation-cell division (RND) (TC 2.A.6) family. MmpL subfamily.

The protein localises to the cell membrane. The sequence is that of Putative membrane protein ActII-3 (actII-3) from Streptomyces coelicolor (strain ATCC BAA-471 / A3(2) / M145).